Consider the following 279-residue polypeptide: Acetyl-coenzyme A carboxylase carboxyl transferase subunit beta (279 aa).

A CoA carboxyltransferase N-terminal domain is found at 23 to 279 (LWWKCEECGA…LTTLLSLMKL (257 aa)). Zn(2+) contacts are provided by cysteine 27, cysteine 30, cysteine 46, and cysteine 49. The segment at 27-49 (CEECGAALHKKQMEASDHTCPQC) adopts a C4-type zinc-finger fold.

This sequence belongs to the AccD/PCCB family. Acetyl-CoA carboxylase is a heterohexamer composed of biotin carboxyl carrier protein (AccB), biotin carboxylase (AccC) and two subunits each of ACCase subunit alpha (AccA) and ACCase subunit beta (AccD). It depends on Zn(2+) as a cofactor.

The protein resides in the cytoplasm. It carries out the reaction N(6)-carboxybiotinyl-L-lysyl-[protein] + acetyl-CoA = N(6)-biotinyl-L-lysyl-[protein] + malonyl-CoA. Its pathway is lipid metabolism; malonyl-CoA biosynthesis; malonyl-CoA from acetyl-CoA: step 1/1. Functionally, component of the acetyl coenzyme A carboxylase (ACC) complex. Biotin carboxylase (BC) catalyzes the carboxylation of biotin on its carrier protein (BCCP) and then the CO(2) group is transferred by the transcarboxylase to acetyl-CoA to form malonyl-CoA. The chain is Acetyl-coenzyme A carboxylase carboxyl transferase subunit beta from Chlorobium chlorochromatii (strain CaD3).